A 101-amino-acid chain; its full sequence is Small ribosomal subunit protein uS14 (101 aa).

The protein belongs to the universal ribosomal protein uS14 family. In terms of assembly, part of the 30S ribosomal subunit. Contacts proteins S3 and S10.

Functionally, binds 16S rRNA, required for the assembly of 30S particles and may also be responsible for determining the conformation of the 16S rRNA at the A site. The protein is Small ribosomal subunit protein uS14 of Caulobacter vibrioides (strain ATCC 19089 / CIP 103742 / CB 15) (Caulobacter crescentus).